Here is a 541-residue protein sequence, read N- to C-terminus: Probable inorganic phosphate transporter 1-12 (541 aa).

Residues methionine 1 to alanine 26 are Cytoplasmic-facing. A helical membrane pass occupies residues isoleucine 27–valine 47. Topologically, residues threonine 48–asparagine 70 are extracellular. A helical transmembrane segment spans residues isoleucine 71–glycine 91. At tryptophan 92–lysine 100 the chain is on the cytoplasmic side. A helical membrane pass occupies residues serine 101–phenylalanine 121. Over serine 122–threonine 124 the chain is Extracellular. The helical transmembrane segment at proline 125 to glycine 145 threads the bilayer. At aspartate 146–arginine 163 the chain is on the cytoplasmic side. The chain crosses the membrane as a helical span at residues glycine 164–valine 184. Residues threonine 185–alanine 213 lie on the Extracellular side of the membrane. Residues aspartate 214–tryptophan 234 form a helical membrane-spanning segment. Over arginine 235–histidine 297 the chain is Cytoplasmic. Residues leucine 298–phenylalanine 318 traverse the membrane as a helical segment. Residues glutamine 319–threonine 349 lie on the Extracellular side of the membrane. A helical membrane pass occupies residues leucine 350–isoleucine 370. The Cytoplasmic segment spans residues glycine 371 to lysine 374. Residues isoleucine 375–histidine 395 traverse the membrane as a helical segment. Residues histidine 396 to glutamine 403 are Extracellular-facing. Residues valine 404–threonine 424 form a helical membrane-spanning segment. At threonine 425 to glycine 443 the chain is on the cytoplasmic side. The chain crosses the membrane as a helical span at residues isoleucine 444–alanine 464. At glutamine 465 to asparagine 484 the chain is on the extracellular side. Residues alanine 485 to proline 505 traverse the membrane as a helical segment. At glutamate 506 to valine 541 the chain is on the cytoplasmic side. The interval leucine 512–valine 541 is disordered. The segment covering methionine 515–alanine 524 has biased composition (acidic residues). A compositionally biased stretch (polar residues) spans alanine 532–valine 541.

This sequence belongs to the major facilitator superfamily. Phosphate:H(+) symporter (TC 2.A.1.9) family.

The protein localises to the membrane. High-affinity transporter for external inorganic phosphate. The chain is Probable inorganic phosphate transporter 1-12 (PHT1-12) from Oryza sativa subsp. japonica (Rice).